The primary structure comprises 122 residues: MIQMQTNLDVADNSGARRVMCIKVLGGSKRKYASVGDIIVVSIKEAIPRGRVKKGDVMKAVVVRTAKDIRRADGSVIRFDNNAAVLIDNKKEPIGSRIFGPVPRELRAKNHMKIISLAPEVL.

The protein belongs to the universal ribosomal protein uL14 family. As to quaternary structure, part of the 50S ribosomal subunit. Forms a cluster with proteins L3 and L19. In the 70S ribosome, L14 and L19 interact and together make contacts with the 16S rRNA in bridges B5 and B8.

Binds to 23S rRNA. Forms part of two intersubunit bridges in the 70S ribosome. The chain is Large ribosomal subunit protein uL14 from Allorhizobium ampelinum (strain ATCC BAA-846 / DSM 112012 / S4) (Agrobacterium vitis (strain S4)).